Here is a 91-residue protein sequence, read N- to C-terminus: C-C motif chemokine 5 (91 aa).

A signal peptide spans 1 to 23; it reads MKVSAARLAVILVATALCAPASA. 2 cysteine pairs are disulfide-bonded: C33-C57 and C34-C73.

This sequence belongs to the intercrine beta (chemokine CC) family.

Its subcellular location is the secreted. Its function is as follows. Chemoattractant for blood monocytes, memory T-helper cells and eosinophils. Causes the release of histamine from basophils and activates eosinophils. May activate several chemokine receptors including CCR1, CCR3, CCR4 and CCR5. May also be an agonist of the G protein-coupled receptor GPR75. Together with GPR75, may play a role in neuron survival through activation of a downstream signaling pathway involving the PI3, Akt and MAP kinases. By activating GPR75 may also play a role in insulin secretion by islet cells. The protein is C-C motif chemokine 5 (CCL5) of Macaca mulatta (Rhesus macaque).